The chain runs to 198 residues: Transmembrane gamma-carboxyglutamic acid protein 2 (198 aa).

The first 17 residues, 1–17 (MRGRPSLLLVYMGLATC), serve as a signal peptide directing secretion. The propeptide occupies 18-51 (LDTSPHREQNQVLDIFLDAPEAQSFLVGRRRFPR). The 47-residue stretch at 52–98 (ANHWDLELLTPGNLERECLEERCSWEEAREYFEDNTLTERFWESYTY) folds into the Gla domain. Topologically, residues 52–111 (ANHWDLELLTPGNLERECLEERCSWEEAREYFEDNTLTERFWESYTYNGKGGRGRVDVAG) are extracellular. A disulfide bond links cysteine 69 and cysteine 74. Glutamate 72 carries the post-translational modification 4-carboxyglutamate. The helical transmembrane segment at 112–132 (LAVGLTSGILLIVLAGLGAFW) threads the bilayer. Residues 133 to 198 (YLHYRRRRLR…PPYSSLRRPH (66 aa)) are Cytoplasmic-facing. Residues 156–198 (PLSPQTPQSPPLPPGLPTYEQALAASGVHDAPPPPYSSLRRPH) are disordered. Residues 162–171 (PQSPPLPPGL) show a composition bias toward pro residues. The LPXY motif; mediates binding to WW domain-containing proteins motif lies at 171-174 (LPTY). The PPXY motif; mediates binding to WW domain-containing proteins signature appears at 188-191 (PPPY).

In terms of assembly, interacts with NEDD4. Interacts with transcriptional coactivator YAP1. Gamma-carboxyglutamate residues are formed by vitamin K dependent carboxylation. These residues are essential for the binding of calcium.

The protein resides in the cell membrane. This chain is Transmembrane gamma-carboxyglutamic acid protein 2 (Prrg2), found in Mus musculus (Mouse).